The primary structure comprises 148 residues: Large ribosomal subunit protein bL9 (148 aa).

The protein belongs to the bacterial ribosomal protein bL9 family.

In terms of biological role, binds to the 23S rRNA. This Caldicellulosiruptor saccharolyticus (strain ATCC 43494 / DSM 8903 / Tp8T 6331) protein is Large ribosomal subunit protein bL9.